The sequence spans 386 residues: MVIRRKMNKMIRKGMIGAVMLGAAVAISGGVATAGYIQGTHVKTDLPGPFHITMSPDGSTLFISNQSGHSVTFVDARTQKVTGEVAVRVQPEASAVTPDGAFLYVCNAESDSVSVVDIQRKQEIKEIKVGDWPSGIKISPDGKTAYVACSGCMWNAIDVIDTGRMEKVRSIYTSDYGPRMVEISPDGKTLVAILDTVGSINRSVDFIDIASGRVVENRVIHESSNLRDVVYTPDGKYIAVTHQTPKNWLPVCEAENGQVFTNNVTIIETKAGGKVARLPLDDLNNYDGNPYGMAMDPKGKYLYIGVRGMHRVTILDMDKVLGLVRSSTQEELDYLRDDLGLVRDYLVARVPTGLGPSSVCLSPDGKFCYAANYFSNNVTVIRTAVD.

An N-terminal signal peptide occupies residues 1-34; that stretch reads MVIRRKMNKMIRKGMIGAVMLGAAVAISGGVATA.

Part of the hydrazine synthase complex that forms an elongated dimer of heterotrimers composed of one alpha, one beta and one gamma subunit.

It localises to the anammoxosome. It functions in the pathway nitrogen metabolism. In terms of biological role, component of the hydrazine synthase complex that catalyzes the condensation of nitric oxide (NO) with ammonium to form hydrazine. The beta subunit may play a role in modulating transport of the hydroxylamine intermediate through a tunnel between the gamma and alpha subunit's active site. Is involved in anaerobic ammonium oxidation (anammox), a biological process in which nitrite is used as the electron acceptor in the conversion of ammonium to dinitrogen gas (N2) and water; this bacterial process has a major role in the Earth's nitrogen cycle and has been estimated to synthesize up to 50% of the dinitrogen gas emitted into our atmosphere from the oceans. This chain is Hydrazine synthase subunit beta, found in Kuenenia stuttgartiensis.